A 144-amino-acid chain; its full sequence is Cytochrome c oxidase subunit 4 isoform 1, mitochondrial (144 aa).

Topologically, residues 1–73 (SVVKSEDFSL…SFAEMNRGSN (73 aa)) are mitochondrial matrix. Lys4 is modified (N6-acetyllysine; alternate). N6-succinyllysine; alternate is present on Lys4. The residue at position 28 (Lys28) is an N6-acetyllysine. A phosphoserine mark is found at Ser31 and Ser33. Lys35 bears the N6-acetyllysine; alternate mark. Lys35 is subject to N6-succinyllysine; alternate. Position 42 is an N6-acetyllysine (Lys42). Residues 74–99 (EWKTVVGGAMFFIGFTALVIMWQKHY) traverse the membrane as a helical segment. At 100-144 (VYGPLPQSFDKEWVAKQTKRMLDMKVNPIQGLASKWDYEKNEWKK) the chain is on the mitochondrial intermembrane side.

Belongs to the cytochrome c oxidase IV family. In terms of assembly, component of the cytochrome c oxidase (complex IV, CIV), a multisubunit enzyme composed of 14 subunits. The complex is composed of a catalytic core of 3 subunits MT-CO1, MT-CO2 and MT-CO3, encoded in the mitochondrial DNA, and 11 supernumerary subunits COX4I, COX5A, COX5B, COX6A, COX6B, COX6C, COX7A, COX7B, COX7C, COX8 and NDUFA4, which are encoded in the nuclear genome. The complex exists as a monomer or a dimer and forms supercomplexes (SCs) in the inner mitochondrial membrane with NADH-ubiquinone oxidoreductase (complex I, CI) and ubiquinol-cytochrome c oxidoreductase (cytochrome b-c1 complex, complex III, CIII), resulting in different assemblies (supercomplex SCI(1)III(2)IV(1) and megacomplex MCI(2)III(2)IV(2)). Interacts with PHB2; the interaction decreases in absence of SPHK2. Interacts with AFG1L. Interacts with ABCB7; this interaction allows the regulation of cellular iron homeostasis and cellular reactive oxygen species (ROS) levels in cardiomyocytes. Interacts with FLVCR2; this interaction occurs in the absence of heme and is disrupted upon heme binding. Interacts with IRGC.

The protein resides in the mitochondrion inner membrane. It functions in the pathway energy metabolism; oxidative phosphorylation. Its function is as follows. Component of the cytochrome c oxidase, the last enzyme in the mitochondrial electron transport chain which drives oxidative phosphorylation. The respiratory chain contains 3 multisubunit complexes succinate dehydrogenase (complex II, CII), ubiquinol-cytochrome c oxidoreductase (cytochrome b-c1 complex, complex III, CIII) and cytochrome c oxidase (complex IV, CIV), that cooperate to transfer electrons derived from NADH and succinate to molecular oxygen, creating an electrochemical gradient over the inner membrane that drives transmembrane transport and the ATP synthase. Cytochrome c oxidase is the component of the respiratory chain that catalyzes the reduction of oxygen to water. Electrons originating from reduced cytochrome c in the intermembrane space (IMS) are transferred via the dinuclear copper A center (CU(A)) of subunit 2 and heme A of subunit 1 to the active site in subunit 1, a binuclear center (BNC) formed by heme A3 and copper B (CU(B)). The BNC reduces molecular oxygen to 2 water molecules using 4 electrons from cytochrome c in the IMS and 4 protons from the mitochondrial matrix. The protein is Cytochrome c oxidase subunit 4 isoform 1, mitochondrial (COX4I1) of Gorilla gorilla gorilla (Western lowland gorilla).